The following is a 302-amino-acid chain: Glutamyl-Q tRNA(Asp) synthetase (302 aa).

Residues 13 to 17 and Asp-49 contribute to the L-glutamate site; that span reads RFAPS. The 'HIGH' region motif lies at 16–26; the sequence is PSPTGPLHLGS. Cys-105, Cys-107, Tyr-119, and Cys-123 together coordinate Zn(2+). L-glutamate-binding residues include Tyr-178 and Arg-196. A 'KMSKS' region motif is present at residues 234 to 238; the sequence is KLSKQ. Lys-237 lines the ATP pocket.

It belongs to the class-I aminoacyl-tRNA synthetase family. GluQ subfamily. It depends on Zn(2+) as a cofactor.

Catalyzes the tRNA-independent activation of glutamate in presence of ATP and the subsequent transfer of glutamate onto a tRNA(Asp). Glutamate is transferred on the 2-amino-5-(4,5-dihydroxy-2-cyclopenten-1-yl) moiety of the queuosine in the wobble position of the QUC anticodon. This chain is Glutamyl-Q tRNA(Asp) synthetase, found in Methylococcus capsulatus (strain ATCC 33009 / NCIMB 11132 / Bath).